A 476-amino-acid polypeptide reads, in one-letter code: Probable periplasmic serine endoprotease DegP-like (476 aa).

A signal peptide spans 1–27 (MSIPRLKSYFTILATVLVLGQAVSAQA). Active-site charge relay system residues include His116, Asp146, and Ser219. Residues 217–219 (GNS) and 274–278 (LGVVI) contribute to the substrate site. 2 PDZ domains span residues 263–354 (LKTG…IRDG) and 360–465 (ELTV…LRQG).

It belongs to the peptidase S1C family.

The protein localises to the periplasm. It carries out the reaction Acts on substrates that are at least partially unfolded. The cleavage site P1 residue is normally between a pair of hydrophobic residues, such as Val-|-Val.. Its function is as follows. Might be efficient in the degradation of transiently denatured and unfolded proteins which accumulate in the periplasm following stress conditions. The polypeptide is Probable periplasmic serine endoprotease DegP-like (mucD) (Pseudomonas fluorescens (strain ATCC BAA-477 / NRRL B-23932 / Pf-5)).